We begin with the raw amino-acid sequence, 169 residues long: MGFEDGFYTILHLAEGQHPNSKIPGGMYASSKDGKDVPVTAEPLGPQSKIRWWIARDPQAGDDMYTITEFRIDNSIPGQWSRSPVETEVPVYLYDRIKAEETGYTCAWRIQPADHGADGVYHIVGNVRIGSTDWADLREEYGEPQVYMKPVPVIPNVYIPRWFILGYEE.

Belongs to the protease inhibitor I85 family.

Functionally, inhibits papain and cysteine cathepsin endopeptidases, and also inhibits cathepsins B and H, which exhibit both exopeptidase and endopeptidase activities. This chain is Macrocypin-1a, found in Macrolepiota procera (Parasol mushroom).